Reading from the N-terminus, the 419-residue chain is Equilibrative nucleotide transporter 5 (419 aa).

Transmembrane regions (helical) follow at residues 20-40, 56-76, 86-106, 108-128, 142-162, 186-206, 265-285, 292-312, 327-347, 354-374, and 393-413; these read MVVC…LLSV, VLTF…AYNE, LIGY…DLAT, GHGG…FGFA, LMCP…GALT, IFLA…AYVF, YVVN…GFLY, GLGS…DLVG, KGLT…YFTA, WMIL…VCIL, and LVLF…LWLI.

The protein belongs to the SLC29A/ENT transporter (TC 2.A.57) family.

The protein resides in the cell membrane. Functionally, may be involved in nucleoside transport. This Arabidopsis thaliana (Mouse-ear cress) protein is Equilibrative nucleotide transporter 5 (ENT5).